Reading from the N-terminus, the 298-residue chain is Probable endonuclease 4 (298 aa).

9 residues coordinate Zn(2+): H69, H111, E146, D180, H183, H215, D228, H230, and E260.

Belongs to the AP endonuclease 2 family. The cofactor is Zn(2+).

It carries out the reaction Endonucleolytic cleavage to 5'-phosphooligonucleotide end-products.. Its function is as follows. Endonuclease IV plays a role in DNA repair. It cleaves phosphodiester bonds at apurinic or apyrimidinic (AP) sites, generating a 3'-hydroxyl group and a 5'-terminal sugar phosphate. The protein is Probable endonuclease 4 of Bacillus cereus (strain B4264).